The chain runs to 246 residues: 14-3-3 protein beta/alpha (246 aa).

Position 1 is an N-acetylmethionine; in 14-3-3 protein beta/alpha; alternate (Met-1). The residue at position 1 (Met-1) is an N-acetylmethionine. Thr-2 carries the post-translational modification N-acetylthreonine; in 14-3-3 protein beta/alpha, N-terminally processed. A Phosphothreonine modification is found at Thr-2. Lys-5 is subject to N6-acetyllysine. Lys-51 bears the N6-acetyllysine; alternate mark. Lys-51 participates in a covalent cross-link: Glycyl lysine isopeptide (Lys-Gly) (interchain with G-Cter in SUMO2); alternate. The residue at position 60 (Ser-60) is a Phosphoserine. Position 70 is an N6-acetyllysine (Lys-70). 3'-nitrotyrosine occurs at positions 84 and 106. Lys-117 is modified (N6-acetyllysine). 2 positions are modified to phosphoserine: Ser-186 and Ser-232.

It belongs to the 14-3-3 family. In terms of assembly, homodimer. Interacts with SAMSN1 and PRKCE. Interacts with AKAP13. Interacts with SSH1 and TORC2/CRTC2. Interacts with ABL1; the interaction results in cytoplasmic location of ABL1 and inhibition of cABL-mediated apoptosis. Interacts with ROR2 (dimer); the interaction results in phosphorylation of YWHAB on tyrosine residues. Interacts with GAB2. Interacts with YAP1 (phosphorylated form). Interacts with the phosphorylated (by AKT1) form of SRPK2. Interacts with PKA-phosphorylated AANAT. Interacts with MYO1C. Interacts with SIRT2. Interacts with the 'Thr-369' phosphorylated form of DAPK2. Interacts with PI4KB, TBC1D22A and TBC1D22B. Interacts with the 'Ser-1134' and 'Ser-1161' phosphorylated form of SOS1. Interacts (via phosphorylated form) with YWHAB; this interaction occurs in a protein kinase AKT1-dependent manner. Interacts with SLITRK1. Interacts with SYNPO2 (phosphorylated form); YWHAB competes with ACTN2 for interaction with SYNPO2. Interacts with RIPOR2 (via phosphorylated form) isoform 2; this interaction occurs in a chemokine-dependent manner and does not compete for binding of RIPOR2 with RHOA nor blocks inhibition of RIPOR2-mediated RHOA activity. Interacts with MARK2 and MARK3. Interacts with TESK1; the interaction is dependent on the phosphorylation of TESK1 'Ser-437' and inhibits TESK1 kinase activity. Interacts with MEFV. Interacts with HDAC4. Interacts with ADAM22 (via C-terminus). As to quaternary structure, (Microbial infection) Interacts with herpes simplex virus 1 protein UL46. (Microbial infection) Probably interacts with Chlamydia trachomatis protein IncG. In terms of processing, the alpha, brain-specific form differs from the beta form in being phosphorylated. Phosphorylated on Ser-60 by protein kinase C delta type catalytic subunit in a sphingosine-dependent fashion.

Its subcellular location is the cytoplasm. The protein resides in the melanosome. It is found in the vacuole membrane. Adapter protein implicated in the regulation of a large spectrum of both general and specialized signaling pathways. Binds to a large number of partners, usually by recognition of a phosphoserine or phosphothreonine motif. Binding generally results in the modulation of the activity of the binding partner. Negative regulator of osteogenesis. Blocks the nuclear translocation of the phosphorylated form (by AKT1) of SRPK2 and antagonizes its stimulatory effect on cyclin D1 expression resulting in blockage of neuronal apoptosis elicited by SRPK2. Negative regulator of signaling cascades that mediate activation of MAP kinases via AKAP13. The protein is 14-3-3 protein beta/alpha (YWHAB) of Homo sapiens (Human).